The chain runs to 428 residues: Histone-lysine N-methyltransferase SMYD3 (428 aa).

Met-1 bears the N-acetylmethionine mark. The SET domain occupies 4 to 240 (LKVEKFATAK…VGEELTICYL (237 aa)). 14–16 (RGN) provides a ligand contact to S-adenosyl-L-methionine. Position 22 is a phosphothreonine (Thr-22). Zn(2+) contacts are provided by Cys-49, Cys-52, Cys-62, Cys-65, Cys-71, Cys-75, His-83, and Cys-87. The MYND-type zinc-finger motif lies at 49 to 87 (CDRCLLGKEKLMRCSQCRVAKYCSAKCQKKAWPDHKREC). Residues Tyr-124, Asn-132, Asn-181, 205–206 (NH), Tyr-239, and Phe-259 each bind S-adenosyl-L-methionine. Positions 272 to 428 (DADMLTGDEQ…EECDANIRAS (157 aa)) are C-terminal domain; essential for histone methyltransferase activity, nuclear localization and mediates interaction with HSP90AA1.

It belongs to the class V-like SAM-binding methyltransferase superfamily. Histone-lysine methyltransferase family. As to quaternary structure, interacts with HSPCA. Interacts with HELZ. Interacts with POLR2A; the interaction may be indirect and may be mediated by HELZ. Interacts with HSP90AA1; this interaction enhances SMYD3 histone-lysine N-methyltransferase. In terms of tissue distribution, expressed in skeletal muscles and testis. Overexpressed in a majority of colorectal and hepatocellular carcinomas.

It localises to the cytoplasm. The protein localises to the nucleus. The catalysed reaction is L-lysyl(4)-[histone H3] + 3 S-adenosyl-L-methionine = N(6),N(6),N(6)-trimethyl-L-lysyl(4)-[histone H3] + 3 S-adenosyl-L-homocysteine + 3 H(+). Histone methyltransferase activity strongly stimulated by HSPCA. Functionally, histone methyltransferase. Specifically methylates 'Lys-4' of histone H3, inducing di- and tri-methylation, but not monomethylation. Also methylates 'Lys-5' of histone H4. Plays an important role in transcriptional activation as a member of an RNA polymerase complex. Binds DNA containing 5'-CCCTCC-3' or 5'-GAGGGG-3' sequences. The protein is Histone-lysine N-methyltransferase SMYD3 (SMYD3) of Homo sapiens (Human).